Consider the following 375-residue polypeptide: Adiponectin receptor protein 1 (375 aa).

The tract at residues 1 to 60 is disordered; the sequence is MSSHKGSVVAQGNGAPASNREADTVELAELGPLLEEKGKRVIANPPKAEEEQTCPVPQEE. At 1–136 the chain is on the cytoplasmic side; the sequence is MSSHKGSVVA…SIFRIHTETG (136 aa). A helical transmembrane segment spans residues 137-157; that stretch reads NIWTHLLGFVLFLFLGILTML. At 158–170 the chain is on the extracellular side; it reads RPNMYFMAPLQEK. Residues 171–191 form a helical membrane-spanning segment; it reads VVFGMFFLGAVLCLSFSWLFH. Position 191 (histidine 191) interacts with Zn(2+). Residues 192-203 lie on the Cytoplasmic side of the membrane; the sequence is TVYCHSEKVSRT. A helical membrane pass occupies residues 204 to 224; that stretch reads FSKLDYSGIALLIMGSFVPWL. At 225–234 the chain is on the extracellular side; it reads YYSFYCSPQP. A helical transmembrane segment spans residues 235–255; that stretch reads RLIYLSIVCVLGISAIIVAQW. Topologically, residues 256 to 264 are cytoplasmic; that stretch reads DRFATPKHR. Residues 265–285 traverse the membrane as a helical segment; the sequence is QTRAGVFLGLGLSGVVPTMHF. Over 286–298 the chain is Extracellular; it reads TIAEGFVKATTVG. A helical transmembrane segment spans residues 299–319; the sequence is QMGWFFLMAVMYITGAGLYAA. The Cytoplasmic portion of the chain corresponds to 320 to 337; that stretch reads RIPERFFPGKFDIWFQSH. Zn(2+)-binding residues include histidine 337 and histidine 341. Residues 338-358 traverse the membrane as a helical segment; sequence QIFHVLVVAAAFVHFYGVSNL. Residues 359-375 lie on the Extracellular side of the membrane; it reads QEFRYGLEGGCTDDTLL.

Belongs to the ADIPOR family. In terms of assembly, may form homooligomers and heterooligomers with ADIPOR2. Interacts with APPL2 (via BAR domain); hinders the accessibility of APPL1 to ADIPOR1; negatively regulates adiponectin signaling; ADIPOQ dissociates this interaction and facilitates the recruitment of APPL1 to ADIPOR1. Interacts with APPL1; ADIPOQ enhances this interaction; inhibites adiponectin-stimulated binding of APPL2 to ADIPOR1. In terms of tissue distribution, widely expressed. Highly expressed in heart and skeletal muscle. Expressed at intermediate level in brain, spleen, kidney, liver, placenta, lung and peripheral blood leukocytes. Weakly expressed in colon, thymus and small intestine.

It is found in the cell membrane. Receptor for ADIPOQ, an essential hormone secreted by adipocytes that regulates glucose and lipid metabolism. Required for normal glucose and fat homeostasis and for maintaining a normal body weight. ADIPOQ-binding activates a signaling cascade that leads to increased AMPK activity, and ultimately to increased fatty acid oxidation, increased glucose uptake and decreased gluconeogenesis. Has high affinity for globular adiponectin and low affinity for full-length adiponectin. This Homo sapiens (Human) protein is Adiponectin receptor protein 1.